We begin with the raw amino-acid sequence, 228 residues long: ATP-dependent dethiobiotin synthetase BioD (228 aa).

ATP is bound at residue 12-17; that stretch reads EIGKTT. Residue T16 participates in Mg(2+) binding. Residue K37 is part of the active site. S41 provides a ligand contact to substrate. ATP is bound by residues D54, 116-119, and 205-207; these read EGAG and PRL. Mg(2+) is bound by residues D54 and E116.

Belongs to the dethiobiotin synthetase family. In terms of assembly, homodimer. It depends on Mg(2+) as a cofactor.

It is found in the cytoplasm. It carries out the reaction (7R,8S)-7,8-diammoniononanoate + CO2 + ATP = (4R,5S)-dethiobiotin + ADP + phosphate + 3 H(+). The protein operates within cofactor biosynthesis; biotin biosynthesis; biotin from 7,8-diaminononanoate: step 1/2. Catalyzes a mechanistically unusual reaction, the ATP-dependent insertion of CO2 between the N7 and N8 nitrogen atoms of 7,8-diaminopelargonic acid (DAPA, also called 7,8-diammoniononanoate) to form a ureido ring. This Pseudomonas aeruginosa (strain LESB58) protein is ATP-dependent dethiobiotin synthetase BioD.